The primary structure comprises 204 residues: UPF0637 protein SAR1080 (204 aa).

The protein belongs to the UPF0637 family.

The polypeptide is UPF0637 protein SAR1080 (Staphylococcus aureus (strain MRSA252)).